A 91-amino-acid polypeptide reads, in one-letter code: Cell division topological specificity factor (91 aa).

Belongs to the MinE family.

Functionally, prevents the cell division inhibition by proteins MinC and MinD at internal division sites while permitting inhibition at polar sites. This ensures cell division at the proper site by restricting the formation of a division septum at the midpoint of the long axis of the cell. In Desulfitobacterium hafniense (strain DSM 10664 / DCB-2), this protein is Cell division topological specificity factor.